The primary structure comprises 325 residues: Cell division protein ZipA (325 aa).

Topologically, residues 1-5 (MQELR) are periplasmic. Residues 6–26 (LVLILVGALAIAALLFHGLWT) form a helical membrane-spanning segment. At 27-325 (SRKETSSKFG…KQRVKVFCRK (299 aa)) the chain is on the cytoplasmic side.

This sequence belongs to the ZipA family. Interacts with FtsZ via their C-terminal domains.

The protein localises to the cell inner membrane. In terms of biological role, essential cell division protein that stabilizes the FtsZ protofilaments by cross-linking them and that serves as a cytoplasmic membrane anchor for the Z ring. Also required for the recruitment to the septal ring of downstream cell division proteins. This Aliivibrio fischeri (strain MJ11) (Vibrio fischeri) protein is Cell division protein ZipA.